Here is a 200-residue protein sequence, read N- to C-terminus: Inner membrane protein E199L (200 aa).

Residue Asn-131 is glycosylated (N-linked (GlcNAc...) asparagine; by host). Residues 150–170 (INVMNHPFLTLILIILILIII) traverse the membrane as a helical segment.

Belongs to the asfivirus E199L family. Interacts with host PYCR2; this interaction results in autophagy activation. Contains intramolecular disulfide bonds.

Its subcellular location is the virion membrane. It localises to the host membrane. Its function is as follows. Essential for viral fusion with host endosomal membrane and core release. Not required for virus morphogenesis and egress. Induces complete autophagy through the interaction with and down-regulation of host PYCR2. The protein is Inner membrane protein E199L of Ornithodoros (relapsing fever ticks).